Here is a 356-residue protein sequence, read N- to C-terminus: Chorismate synthase (356 aa).

NADP(+) contacts are provided by Arg-48 and Arg-54. Residues 125–127, 237–238, Gly-281, 296–300, and Arg-322 each bind FMN; these read RSS, NA, and KPTSS.

It belongs to the chorismate synthase family. Homotetramer. Requires FMNH2 as cofactor.

The enzyme catalyses 5-O-(1-carboxyvinyl)-3-phosphoshikimate = chorismate + phosphate. It functions in the pathway metabolic intermediate biosynthesis; chorismate biosynthesis; chorismate from D-erythrose 4-phosphate and phosphoenolpyruvate: step 7/7. Functionally, catalyzes the anti-1,4-elimination of the C-3 phosphate and the C-6 proR hydrogen from 5-enolpyruvylshikimate-3-phosphate (EPSP) to yield chorismate, which is the branch point compound that serves as the starting substrate for the three terminal pathways of aromatic amino acid biosynthesis. This reaction introduces a second double bond into the aromatic ring system. The polypeptide is Chorismate synthase (Novosphingobium aromaticivorans (strain ATCC 700278 / DSM 12444 / CCUG 56034 / CIP 105152 / NBRC 16084 / F199)).